We begin with the raw amino-acid sequence, 89 residues long: Islet amyloid polypeptide (89 aa).

Positions 1 to 22 (MCLLKLPVVLIVLLVALHHLKA) are cleaved as a signal peptide. Residues 23–31 (TPIESNQVE) constitute a propeptide that is removed on maturation. A disulfide bridge links cysteine 35 with cysteine 40. Position 70 is a tyrosine amide (tyrosine 70). Positions 74 to 89 (STVDILNREPLNYLPF) are excised as a propeptide.

Belongs to the calcitonin family. In terms of assembly, can form homodimers. Interacts with IDE and INS. Interaction with INS inhibits homodimerization and fibril formation.

The protein resides in the secreted. Amylin/IAPP is a glucoregulatory peptide hormone that plays an important role in the regulation of energy homeostasis. Selectively inhibits insulin-stimulated glucose utilization and glycogen deposition in muscle, while not affecting adipocyte glucose metabolism. IAPP function is mediated by the CALCR-RAMPs (AMYRs) receptor complexes. Amylin can also bind CALCR receptor in the absence of RAMPs, although it is more selective for AMYRs. This is Islet amyloid polypeptide (IAPP) from Felis catus (Cat).